The sequence spans 168 residues: MPRSRINGNFIDKTFSIVANILLRIIPTTSGEKEAFTYYRDGISAQSEGNYAEALQNYYEAMRLEIDPYDRSYILYNIGLIHTSNGEHTKALEYYFRALERNSFLPQAFNNMAVICHYRGEQAIRQGDSEIAEAWFDQAAEYWKQAIALTPGNYIEAHNWLKITRRFE.

TPR repeat units follow at residues 35 to 68, 72 to 105, and 120 to 153; these read AFTY…EIDP, SYIL…NSFL, and GEQA…TPGN.

Belongs to the Ycf3 family.

The protein localises to the plastid. Its subcellular location is the chloroplast thylakoid membrane. Its function is as follows. Essential for the assembly of the photosystem I (PSI) complex. May act as a chaperone-like factor to guide the assembly of the PSI subunits. This chain is Photosystem I assembly protein Ycf3, found in Jasminum nudiflorum (Winter jasmine).